The chain runs to 319 residues: Ribosomal RNA small subunit methyltransferase H (319 aa).

S-adenosyl-L-methionine-binding positions include 37–39, Asp-56, Leu-90, Asp-104, and Gln-111; that span reads GGH.

The protein belongs to the methyltransferase superfamily. RsmH family.

The protein localises to the cytoplasm. It carries out the reaction cytidine(1402) in 16S rRNA + S-adenosyl-L-methionine = N(4)-methylcytidine(1402) in 16S rRNA + S-adenosyl-L-homocysteine + H(+). Its function is as follows. Specifically methylates the N4 position of cytidine in position 1402 (C1402) of 16S rRNA. In Nocardioides sp. (strain ATCC BAA-499 / JS614), this protein is Ribosomal RNA small subunit methyltransferase H.